A 111-amino-acid chain; its full sequence is Large ribosomal subunit protein P2-2 (111 aa).

The disordered stretch occupies residues Ala86–Asp111.

Belongs to the eukaryotic ribosomal protein P1/P2 family. P1 and P2 exist as dimers at the large ribosomal subunit. In terms of processing, phosphorylated.

In terms of biological role, plays an important role in the elongation step of protein synthesis. The sequence is that of Large ribosomal subunit protein P2-2 (LIP') from Leishmania infantum.